The primary structure comprises 415 residues: Amino acid decarboxylase lolD2 (415 aa).

Lysine 62 carries the post-translational modification N6-(pyridoxal phosphate)lysine. Residues serine 194, glycine 231, and 266 to 269 contribute to the pyridoxal 5'-phosphate site; that span reads EPGT. 315–316 contributes to the substrate binding site; the sequence is IV. Cysteine 351 serves as the catalytic Proton donor; shared with dimeric partner. The residue at position 351 (cysteine 351) is an S-nitrosocysteine. A substrate-binding site is contributed by aspartate 352. Tyrosine 381 is a pyridoxal 5'-phosphate binding site.

Belongs to the Orn/Lys/Arg decarboxylase class-II family. As to quaternary structure, homodimer. Pyridoxal 5'-phosphate is required as a cofactor.

It functions in the pathway alkaloid biosynthesis. Its function is as follows. Amino acid decarboxylase; part of the gene cluster that mediates the biosynthesis of loline alkaloids, potent insecticidal agents composed of a pyrrolizidine ring system and an uncommon ether bridge linking carbons 2 and 7. Lolines are structurally differentiated by the various modifications of the L-amino group and include norloline, loline, N-methylloline, N-acetylloline, N-acetylnorloline, and N-formylloline. The first committed step is the condensation of O-acetyl-L-homoserine (derived from L-aspartic acid) and L-proline, probably catalyzed by the gamma-type pyridoxal 5'-phosphate(PLP)-dependent enzyme lolC, to give the diamino diacid, NACPP. Ensuing cyclization, decarboxylation, and acetylation steps yield 1-exo-acetamidopyrrolizidine (AcAP). LolO is required for installation of the ether bridge upon the pathway intermediate, 1-exo-acetamidopyrrolizidine (AcAP). In sequential 2-oxoglutarate- and O(2)-consuming steps, lolO removes hydrogens from C2 and C7 of AcAP to form both carbon-oxygen bonds in N-acetylnorloline (NANL), the precursor to all other lolines. The enzymes lolD, lolE, lolF and lolT have also been proposed to be involved in the ether-bridge installation. Further processing of the exocyclic moiety of NANL by fungal N-acetamidase (LolN), methyltransferase (LolM), and cytochrome P450 (LolP) enzymes, with occasional involvement of a plant acetyltransferase, generates the other known lolines. LolN transforms NANL to norlonine which is monomethylated and dimethylated to respectively lonine and N-methyllonine (NML) by lolM. LolP catalyzes hydroxylation of the methyl group in N-methylloline (NML) and further oxygenation to N-formylloline (NFL). A plant acetyltransferase is responsible for the acetylation of loline to form N-acetylloline (NAL). LolA might interact with aspartate kinase to prevent feedback inhibition of its activity by these end products and thereby promote production of L-homoserine from L-aspartate. The chain is Amino acid decarboxylase lolD2 from Epichloe uncinata (Endophyte fungus).